Reading from the N-terminus, the 115-residue chain is Macrophage migration inhibitory factor (115 aa).

Pro2 acts as the Proton acceptor; via imino nitrogen in catalysis. Substrate-binding residues include Lys33 and Ile65. Residue Lys78 is modified to N6-acetyllysine; alternate. Lys78 is subject to N6-succinyllysine; alternate. A substrate-binding site is contributed by Asn98.

It belongs to the MIF family. Homotrimer. Interacts with CXCR2 extracellular domain. Interacts with the CD74 extracellular domain, USO1, COPS5 and BNIPL.

The protein resides in the secreted. It is found in the cytoplasm. The catalysed reaction is 3-phenylpyruvate = enol-phenylpyruvate. It catalyses the reaction L-dopachrome = 5,6-dihydroxyindole-2-carboxylate. Its function is as follows. Pro-inflammatory cytokine involved in the innate immune response to bacterial pathogens. The expression of MIF at sites of inflammation suggests a role as mediator in regulating the function of macrophages in host defense. Counteracts the anti-inflammatory activity of glucocorticoids. Has phenylpyruvate tautomerase and dopachrome tautomerase activity (in vitro), but the physiological substrate is not known. It is not clear whether the tautomerase activity has any physiological relevance, and whether it is important for cytokine activity. This chain is Macrophage migration inhibitory factor, found in Homo sapiens (Human).